The sequence spans 475 residues: Ribosomal protein uS12 methylthiotransferase RimO (475 aa).

The 115-residue stretch at 36 to 150 (NKINFISLGC…ILKAVQSTQK (115 aa)) folds into the MTTase N-terminal domain. [4Fe-4S] cluster contacts are provided by cysteine 45, cysteine 81, cysteine 113, cysteine 185, cysteine 189, and cysteine 192. The 233-residue stretch at 171-403 (STPKHYAYLK…MQVQKKVVKK (233 aa)) folds into the Radical SAM core domain. A TRAM domain is found at 406–475 (KKMIGKKIAV…ADYDLVGHVI (70 aa)).

It belongs to the methylthiotransferase family. RimO subfamily. [4Fe-4S] cluster serves as cofactor.

The protein resides in the cytoplasm. The enzyme catalyses L-aspartate(89)-[ribosomal protein uS12]-hydrogen + (sulfur carrier)-SH + AH2 + 2 S-adenosyl-L-methionine = 3-methylsulfanyl-L-aspartate(89)-[ribosomal protein uS12]-hydrogen + (sulfur carrier)-H + 5'-deoxyadenosine + L-methionine + A + S-adenosyl-L-homocysteine + 2 H(+). Functionally, catalyzes the methylthiolation of an aspartic acid residue of ribosomal protein uS12. This chain is Ribosomal protein uS12 methylthiotransferase RimO, found in Protochlamydia amoebophila (strain UWE25).